Consider the following 260-residue polypeptide: Sperm microtubule inner protein 6 (260 aa).

It belongs to the SPMIP6 family. As to quaternary structure, microtubule inner protein component of sperm flagellar doublet microtubules. Interacts with alpha-tubulin. Testis-specific, expressed exclusively in germ cells (at protein level). As to expression, testis-specific. In terms of tissue distribution, expressed in both lung and testis.

The protein resides in the cytoplasm. It is found in the cytoskeleton. The protein localises to the nucleus. It localises to the mitochondrion. Its subcellular location is the flagellum axoneme. Its function is as follows. May participate in intramanchette transport and midpiece formation of the sperm tail. May play a potential role in somatic cell proliferation. In Mus musculus (Mouse), this protein is Sperm microtubule inner protein 6 (SPMIP6).